The chain runs to 518 residues: Prosaposin (518 aa).

A signal peptide spans 1 to 17 (MARRLLTLLGLLAAAVA). Positions 18–60 (SPVLWQKDCAKGPEVWCQSLRTASQCGAVKHCQQNVWSKPAVN) are excised as a propeptide. Residues 19 to 59 (PVLWQKDCAKGPEVWCQSLRTASQCGAVKHCQQNVWSKPAV) enclose the Saposin A-type 1 domain. 4 Saposin B-type domains span residues 60–143 (NSIP…QSLQ), 193–277 (TEDV…PSVK), 307–388 (TFSV…AANK), and 399–480 (AGGF…GAAK). 3 disulfides stabilise this stretch: cysteine 64-cysteine 139, cysteine 67-cysteine 133, and cysteine 95-cysteine 107. Residue asparagine 81 is glycosylated (N-linked (GlcNAc...) asparagine). A propeptide spanning residues 144–193 (KHLAAMKLQKQLQSNKIPELDFSELTSPFMANVPLLLYPQDKPKQKSKAT) is cleaved from the precursor. Disulfide bonds link cysteine 197–cysteine 273, cysteine 200–cysteine 267, and cysteine 229–cysteine 240. N-linked (GlcNAc...) asparagine glycosylation occurs at asparagine 214. The propeptide occupies 277-306 (KSVPLQTLVPAQVVHEVKMETVEKATVQEK). 3 disulfides stabilise this stretch: cysteine 311–cysteine 384, cysteine 314–cysteine 378, and cysteine 342–cysteine 353. Asparagine 328 carries an N-linked (GlcNAc...) asparagine glycan. Positions 388–398 (KPPQQPVVVKP) are excised as a propeptide. 3 disulfide bridges follow: cysteine 403–cysteine 476, cysteine 406–cysteine 470, and cysteine 434–cysteine 445. Asparagine 420 carries N-linked (GlcNAc...) asparagine glycosylation. A propeptide spanning residues 480–518 (KKPLLGEDACVWGPGYWCKNMETAAQCNAVDHCRRHVWN) is cleaved from the precursor. The region spanning 482–518 (PLLGEDACVWGPGYWCKNMETAAQCNAVDHCRRHVWN) is the Saposin A-type 2 domain.

In terms of assembly, saposin-B is a homodimer. In terms of processing, this precursor is proteolytically processed to 4 small peptides, which are similar to each other and are sphingolipid hydrolase activator proteins.

It is found in the lysosome. It localises to the secreted. Its function is as follows. The lysosomal degradation of sphingolipids takes place by the sequential action of specific hydrolases. Some of these enzymes require specific low-molecular mass, non-enzymatic proteins: the sphingolipids activator proteins (coproteins). In terms of biological role, saposin-A and saposin-C stimulate the hydrolysis of glucosylceramide by beta-glucosylceramidase (EC 3.2.1.45) and galactosylceramide by beta-galactosylceramidase (EC 3.2.1.46). Saposin-C apparently acts by combining with the enzyme and acidic lipid to form an activated complex, rather than by solubilizing the substrate. Saposin-B stimulates the hydrolysis of galacto-cerebroside sulfate by arylsulfatase A (EC 3.1.6.8), GM1 gangliosides by beta-galactosidase (EC 3.2.1.23) and globotriaosylceramide by alpha-galactosidase A (EC 3.2.1.22). Saposin-B forms a solubilizing complex with the substrates of the sphingolipid hydrolases. Functionally, saposin-D is a specific sphingomyelin phosphodiesterase activator (EC 3.1.4.12). This chain is Prosaposin (PSAP), found in Gallus gallus (Chicken).